The following is an 833-amino-acid chain: MLGFLFKKVFGSKNDRYIKRLRPIVAAINALEPQMQSLRDEDFPVRIAEYRQQVEEGRKLDDMLPEVFALVREAGKRVFNMRHFDVQLVGGMALHHGKIAEMKTGEGKTLVATLPVVLNALTGKGVHVVTVNDYLAKRDAAWMGQLYNFLGLSVGVIVHGLDDEQRKAAYGADITYGTNNEFGFDYLRDNMKFYAEQLVQRGHNFAIVDEVDSILIDEARTPLIISGASEESTGLYRHMDEIVRKLTRDTHFTVDEKARTAMLTDEGVAFCEKLVGIDNLYDPGNITTQHHLMQALKAHNLFRRDVDYIVKEGQVVIVDEFTGRLMPGRRFSDGLHQALEAKEAVKIEAENQTLASITFQNYFRMYAKLAGMTGTADTEAVEFHQIYSLEVVSIPTNKPMQRKDFADAIYRTKREKYDAIAQAIAELHKAGQPVLVGTISIETSELLSTMLKKTGVPHSVLNAKHHEKEAEIVALAGQRGHVTIATNMAGRGTDIVLGEGVRELGGLHILGTERHESRRIDNQLRGRSGRQGDPGSSRFYLSLEDDLMRLFGSERISGLMEKLGMEEGEPIEARMVSRAIENAQKRVEGHNFEIRKTLLDYDNVMNQQREVIYTLRRDAMSAPDLGPTMEEFLDDVLEDVYAPAEGGEAPSADTVAAVWGRLADVCNITRVMQPAPALPTRDEARAAVLSILHELREDTGESYRDIIRYFMLEELDRCWKEHLRNMDHLRDGIGLRGYGQRDPKLEYKREGFAMFQEMLFRIKEGVFRSLTRLRVQRVEEEAFRHKEQPAAVAYSGGEAEAGPAQPHREDPKVGRNDLCPCGSGRKYKKCCGA.

ATP-binding positions include Gln-87, 105-109 (GEGKT), and Asp-494. The segment at 789-816 (PAAVAYSGGEAEAGPAQPHREDPKVGRN) is disordered. The span at 806–815 (PHREDPKVGR) shows a compositional bias: basic and acidic residues. Residues Cys-819, Cys-821, Cys-830, and Cys-831 each coordinate Zn(2+).

Belongs to the SecA family. As to quaternary structure, monomer and homodimer. Part of the essential Sec protein translocation apparatus which comprises SecA, SecYEG and auxiliary proteins SecDF-YajC and YidC. Zn(2+) is required as a cofactor.

The protein resides in the cell inner membrane. The protein localises to the cytoplasm. The enzyme catalyses ATP + H2O + cellular proteinSide 1 = ADP + phosphate + cellular proteinSide 2.. Its function is as follows. Part of the Sec protein translocase complex. Interacts with the SecYEG preprotein conducting channel. Has a central role in coupling the hydrolysis of ATP to the transfer of proteins into and across the cell membrane, serving as an ATP-driven molecular motor driving the stepwise translocation of polypeptide chains across the membrane. The chain is Protein translocase subunit SecA from Nitratidesulfovibrio vulgaris (strain ATCC 29579 / DSM 644 / CCUG 34227 / NCIMB 8303 / VKM B-1760 / Hildenborough) (Desulfovibrio vulgaris).